The chain runs to 2054 residues: MLETIDKNRALQAAERLQSKLKERGDVANEDKLSLLKSVLQSPLFSQILSLQTSLQQLKDQVNVATLATANADHAHTPQFSSAIISNLQSESLLLSPSNGNLEAISGPGAPPAMDGKPACEELDQLIKSMAQGRHVEIFELLKPPCGGLGFSVVGLRSENRGELGIFVQEIQEGSVAHRDGRLKETDQILAINGQVLDQTITHQQAISILQKAKDTIQLVIARGSLPHISSPRISRSPSAASTVSAHSNPTHWQHVETIELVNDGSGLGFGIIGGKATGVIVKTILPGGVADQHGRLCSGDHILKIGDTDLAGMSSEQVAQVLRQCGNRVKLMIARGAVEETPAPSSLGITLSSSTSTSEMRVDASTQKNEESETFDVELTKNVQGLGITIAGYIGDKKLEPSGIFVKSITKSSAVELDGRIQIGDQIVAVDGTNLQGFTNQQAVEVLRHTGQTVRLTLMRKGASQEAEITSREDTAKDVDLPAENYEKDEESLSLKRSTSILPIEEEGYPLLSTELEETEDVQQEAALLTKWQRIMGINYEIVVAHVSKFSENSGLGISLEATVGHHFIRSVLPEGPVGHSGKLFSGDELLEVNGINLLGENHQDVVNILKELPIDVTMVCCRRTVPPTALSEVDSLDIHDLELTEKPHIDLGEFIGSSETEDPMLAMSDVDQNAEEIQTPLAMWEAGIQAIELEKGSRGLGFSILDYQDPIDPANTVIVIRSLVPGGIAEKDGRLFPGDRLMFVNDINLENSTLEEAVEALKGAPSGMVRIGVAKPLPLSPEEGYVSAKEDTFLCSPHTCKEMGLSDKALFRADLALIDTPDAESVAESRFESQFSPDNDSVYSTQASVLSLHDGACSDGMNYGPSLPSSPPKDVTNSSDLVLGLHLSLEELYTQNLLQRQHAGSPPTDMSPAATSGFTVSDYTPANAVEQKYECANTVAWTPSQLPSGLSTTELAPALPAVAPKYLTEQSSLVSDAESVTLQSMSQEAFERTVTIAKGSSSLGMTVSANKDGLGVIVRSIIHGGAISRDGRIAVGDCILSINEESTISLTNAQARAMLRRHSLIGPDIKITYVPAEHLEEFRVSFGQQAGGIMALDIFSSYTGRDIPELPEREEGEGEESELQNAAYSSWSQPRRVELWREPSKSLGISIVGGRGMGSRLSNGEVMRGIFIKHVLEDSPAGKNGTLKPGDRIVEVDGMDLRDASHEQAVEAIRKAGSPVVFMVQSIVNRPRKSPLPSLPHSLYPKCSFSSTNPFAESLQLTSDKAPSQSESESEKATLCSVPSSSPSVFSEMSSDYAQPSATTVAEDEDKEDEFGYSWKNIQERYGTLTGQLHMIELEKGHSGLGLSLAGNKDRTRMSVFIVGIDPTGAAGRDGRLQIADELLEINGQILYGRSHQNASSIIKCAPSKVKIIFIRNADAVNQMAVCPGSAADPLPSTSESPQNKEVEPSITTSASAVDLSSLTNVYHLELPKDQGGLGIAICEEDTLNGVTIKSLTERGGAAKDGRLKPGDRILAVDDELVAGCPIEKFISLLKTAKTTVKLTVGAENPGCQAVPSAAVTASGERKDSSQTPAVPAPDLEPIPSTSRSSTPAIFASDPATCPIIPGCETTIEISKGQTGLGLSIVGGSDTLLGAIIIHEVYEEGAACKDGRLWAGDQILEVNGIDLRKATHDEAINVLRQTPQRVRLTLYRDEAPYKEEDVCDTFTVELQKRPGKGLGLSIVGKRNDTGVFVSDIVKGGIADADGRLMQGDQILMVNGEDVRNATQEAVAALLKCSLGTVTLEVGRIKAAPFHSERRPSQSSQVSESSLSSFSLPRSGIHTSESSESSAKKNALASEIQGLRTVEIKKGPADALGLSIAGGVGSPLGDVPIFIAMMHPNGVAAQTQKLRVGDRIVTICGTSTDGMTHTQAVNLMKNASGSIEVQVVAGGDVSVVTGHQQELANPCLAFTGLTSSTIFPDDLGPPQSKTITLDRGPDGLGFSIVGGYGSPHGDLPIYVKTVFAKGAAAEDGRLKRGDQIIAVNGQSLEGVTHEEAVAILKRTKGTVTLMVLS.

Residues 3–63 (ETIDKNRALQ…SLQQLKDQVN (61 aa)) enclose the L27 domain. Residues 138-225 (IFELLKPPCG…TIQLVIARGS (88 aa)) form the PDZ 1 domain. The residue at position 231 (Ser231) is a Phosphoserine. PDZ domains are found at residues 258-338 (TIEL…ARGA), 377-463 (DVEL…MRKG), 545-626 (VAHV…CRRT), and 692-778 (AIEL…VAKP). Phosphoserine occurs at positions 782 and 1065. One can recognise a PDZ 6 domain in the interval 995–1076 (TVTIAKGSSS…IGPDIKITYV (82 aa)). Residues 1110–1129 (PELPEREEGEGEESELQNAA) are disordered. The PDZ 7 domain occupies 1138–1230 (RVELWREPSK…PVVFMVQSIV (93 aa)). Arg1157 is subject to Omega-N-methylarginine. Positions 1261 to 1273 (LQLTSDKAPSQSE) are enriched in polar residues. Residues 1261-1312 (LQLTSDKAPSQSESESEKATLCSVPSSSPSVFSEMSSDYAQPSATTVAEDED) form a disordered region. Residues 1283-1297 (SVPSSSPSVFSEMSS) show a composition bias toward low complexity. The 84-residue stretch at 1337–1420 (MIELEKGHSG…KVKIIFIRNA (84 aa)) folds into the PDZ 8 domain. The disordered stretch occupies residues 1433 to 1454 (AADPLPSTSESPQNKEVEPSIT). One can recognise a PDZ 9 domain in the interval 1470-1551 (HLELPKDQGG…TVKLTVGAEN (82 aa)). The disordered stretch occupies residues 1560 to 1594 (AAVTASGERKDSSQTPAVPAPDLEPIPSTSRSSTP). 2 consecutive PDZ domains span residues 1613-1696 (TIEI…YRDE) and 1709-1791 (TVEL…GRIK). The tract at residues 1795–1834 (FHSERRPSQSSQVSESSLSSFSLPRSGIHTSESSESSAKK) is disordered. 2 positions are modified to phosphoserine: Ser1802 and Ser1808. The segment covering 1802–1834 (SQSSQVSESSLSSFSLPRSGIHTSESSESSAKK) has biased composition (low complexity). 2 PDZ domains span residues 1846-1932 (TVEI…VAGG) and 1971-2054 (TITL…MVLS).

Interacts with F11R/JAM, CLDN1, NG2, CXADR, CRB1, MPP4 and PALS1, HTR2A, HTR2B, PLEKHA1/TAPP1 and PLEKHA2/TAPP2. Interacts with CXADR. Interacts with HTR2C, CLDN5, DLG4, GRIN1, SYNGAP1, CAMK2A and CAMK2B. Interacts with FAT4 (via cytoplasmic domain). Interacts with DLL1. As to expression, abundant in all cerebral cortical layers, especially the piriform cortex, the pyramidal cells of the CA1-CA3 subfields of the hippocampus, as well as the granular layer of the dentate gyrus. Detected in the internal granular layer and the mitral cell layer of the olfactory bulb; in the medial habenular nucleus; and in amygdaloid, thalamic, hypothalamic, and pontine nuclei. In the cerebellum, found at high levels in the granular layer. Detected in the lateral ventricle. Expression overlaps with 5-HT2C receptor expression in all regions of the brain including the choroid plexus, where 5-HT2C receptors are highly enriched.

Its subcellular location is the endomembrane system. It is found in the cell junction. The protein resides in the tight junction. It localises to the synapse. The protein localises to the apical cell membrane. Its subcellular location is the postsynaptic density. It is found in the cell projection. The protein resides in the dendrite. It localises to the synaptosome. Functionally, member of the NMDAR signaling complex that may play a role in control of AMPAR potentiation and synaptic plasticity in excitatory synapses. Promotes clustering of HT2RC at the cell surface. The chain is Multiple PDZ domain protein (Mpdz) from Rattus norvegicus (Rat).